A 364-amino-acid chain; its full sequence is RNA polymerase sigma factor SigA (364 aa).

Residues leucine 132–threonine 202 are sigma-70 factor domain-2. The Interaction with polymerase core subunit RpoC motif lies at aspartate 156–glutamine 159. Residues glutamate 211–tyrosine 287 form a sigma-70 factor domain-3 region. The interval valine 300–histidine 353 is sigma-70 factor domain-4. Positions leucine 326 to alanine 345 form a DNA-binding region, H-T-H motif.

The protein belongs to the sigma-70 factor family. RpoD/SigA subfamily. Interacts transiently with the RNA polymerase catalytic core.

The protein resides in the cytoplasm. In terms of biological role, sigma factors are initiation factors that promote the attachment of RNA polymerase to specific initiation sites and are then released. This sigma factor is the primary sigma factor during exponential growth. The polypeptide is RNA polymerase sigma factor SigA (Lactococcus lactis subsp. cremoris (Streptococcus cremoris)).